The primary structure comprises 233 residues: Large ribosomal subunit protein uL1 (233 aa).

Belongs to the universal ribosomal protein uL1 family. In terms of assembly, part of the 50S ribosomal subunit.

Functionally, binds directly to 23S rRNA. The L1 stalk is quite mobile in the ribosome, and is involved in E site tRNA release. Protein L1 is also a translational repressor protein, it controls the translation of the L11 operon by binding to its mRNA. In Geobacillus thermodenitrificans (strain NG80-2), this protein is Large ribosomal subunit protein uL1.